A 357-amino-acid chain; its full sequence is Chorismate synthase (357 aa).

Position 46 (arginine 46) interacts with NADP(+). FMN is bound by residues 123-125, 235-236, glycine 275, 290-294, and arginine 316; these read RSS, NA, and KPTPS.

It belongs to the chorismate synthase family. In terms of assembly, homotetramer. Requires FMNH2 as cofactor.

The catalysed reaction is 5-O-(1-carboxyvinyl)-3-phosphoshikimate = chorismate + phosphate. It participates in metabolic intermediate biosynthesis; chorismate biosynthesis; chorismate from D-erythrose 4-phosphate and phosphoenolpyruvate: step 7/7. Functionally, catalyzes the anti-1,4-elimination of the C-3 phosphate and the C-6 proR hydrogen from 5-enolpyruvylshikimate-3-phosphate (EPSP) to yield chorismate, which is the branch point compound that serves as the starting substrate for the three terminal pathways of aromatic amino acid biosynthesis. This reaction introduces a second double bond into the aromatic ring system. The chain is Chorismate synthase from Nitratiruptor sp. (strain SB155-2).